The chain runs to 271 residues: MSELKLVVAGAAGRMGRVLIQTAIETSGVTVSAALARPGSLALGQDAGLLAGCGEINVPITEDALAAIVDADGILDFTSPDLSVELAALAAQARIVHIIGTTGFSVAHLTKIEAAARHAVIVRSGNMSLGVNLLAALVKKTAAVLGPVYDIEIAEMHHRMKVDAPSGTALLLGEAAAQGRGISLSEHEQRGRDGHTGPRKDGDIGFVSLRGGTVVGDHTVIFAGPGERIELAHRAEDRRIFGRGAVQAALWGKGRKPGLYSMLDVLGLGGE.

Position 10-15 (10-15 (GAAGRM)) interacts with NAD(+). R37 contributes to the NADP(+) binding site. Residues 100–102 (GTT) and 124–127 (SGNM) each bind NAD(+). H157 (proton donor/acceptor) is an active-site residue. H158 contacts (S)-2,3,4,5-tetrahydrodipicolinate. K161 acts as the Proton donor in catalysis. A (S)-2,3,4,5-tetrahydrodipicolinate-binding site is contributed by 167 to 168 (GT). The disordered stretch occupies residues 183–202 (SLSEHEQRGRDGHTGPRKDG). A compositionally biased stretch (basic and acidic residues) spans 185-202 (SEHEQRGRDGHTGPRKDG).

This sequence belongs to the DapB family.

The protein localises to the cytoplasm. The enzyme catalyses (S)-2,3,4,5-tetrahydrodipicolinate + NAD(+) + H2O = (2S,4S)-4-hydroxy-2,3,4,5-tetrahydrodipicolinate + NADH + H(+). It carries out the reaction (S)-2,3,4,5-tetrahydrodipicolinate + NADP(+) + H2O = (2S,4S)-4-hydroxy-2,3,4,5-tetrahydrodipicolinate + NADPH + H(+). It functions in the pathway amino-acid biosynthesis; L-lysine biosynthesis via DAP pathway; (S)-tetrahydrodipicolinate from L-aspartate: step 4/4. In terms of biological role, catalyzes the conversion of 4-hydroxy-tetrahydrodipicolinate (HTPA) to tetrahydrodipicolinate. The chain is 4-hydroxy-tetrahydrodipicolinate reductase from Beijerinckia indica subsp. indica (strain ATCC 9039 / DSM 1715 / NCIMB 8712).